A 360-amino-acid polypeptide reads, in one-letter code: MRKRISAIIMTLFMVLASCSNQLEAEKLAAESKNTFFDSLVKIGQGFQDIFGIFGNAIGDALGFNAVKSGDKKSKIGEHFKKIGDGLTTTKDKLNELSGEISEAKNANGSSIEAVKSAINSASDVFEQLITALTKLAGVAKEAGSTDIGDTASAAALARDKDGVEAIIAGIKAIIDVADKSGVNIEKGNAGGPVNAAANTDAPAALAANAAAGANSTAKLAAEVTKADPWAMIDKINSAKAAVGVQLDANTNYGAGELATGTPNQANGSKAATNADLAAAVALKAMAKGGKFSHAANEDGAVKAAAVSAVNKVLGVLDFIIRKTVSSNLDKIREAVKGIKYSEITETDATESGDAQPTTK.

A signal peptide spans 1 to 18 (MRKRISAIIMTLFMVLAS). Residue Cys-19 is the site of N-palmitoyl cysteine attachment. Cys-19 is lipidated: S-diacylglycerol cysteine.

Belongs to the variable large protein (Vlp) family. Beta subfamily.

It is found in the cell outer membrane. Functionally, the Vlp and Vsp proteins are antigenically distinct proteins, only one vlp or vsp gene is transcriptionally active at any one time. Switching between these genes is a mechanism of host immune response evasion. The sequence is that of Variable large protein 14 from Borrelia hermsii.